The following is a 589-amino-acid chain: uncharacterized protein (589 aa).

An RRM domain is found at 242-314; it reads TALEVRNIPE…RFIKIFWYNP (73 aa). Disordered stretches follow at residues 322 to 348, 443 to 465, and 566 to 589; these read PKKF…VDPA, ESPA…RGTN, and TSME…GRWR. Serine 330 bears the Phosphoserine mark. Positions 330-340 are enriched in low complexity; it reads SPTTSDSSNVE. The residue at position 332 (threonine 332) is a Phosphothreonine. Serine 334 is subject to Phosphoserine. Polar residues predominate over residues 566–579; it reads TSMETGESNTSDNM.

Its subcellular location is the nucleus. This is an uncharacterized protein from Schizosaccharomyces pombe (strain 972 / ATCC 24843) (Fission yeast).